Reading from the N-terminus, the 856-residue chain is Increased rDNA silencing protein 4 (856 aa).

Disordered regions lie at residues 1–204 (MSAS…EPKS), 230–563 (KQEE…PTPE), and 589–672 (TSLE…DEDL). Low complexity-rich tracts occupy residues 12–42 (GPAS…ATLA), 67–84 (VPTP…RTVG), and 111–130 (SRVV…AGRT). Over residues 152–162 (HVEERANDHAP) the composition is skewed to basic and acidic residues. A compositionally biased stretch (low complexity) spans 194–204 (ASAKPSSEPKS). Residues 239-254 (KKKKKKKPRPASKTQH) are compositionally biased toward basic residues. 2 stretches are compositionally biased toward polar residues: residues 255–275 (HQTL…ENQC) and 303–315 (SLST…SSTG). Over residues 329 to 347 (GETRNRNGDVRDKPSREGG) the composition is skewed to basic and acidic residues. Polar residues-rich tracts occupy residues 396–410 (PVSQ…TIIS), 451–468 (RVVS…QSAE), and 478–488 (RNSTSSDETFV). Basic and acidic residues predominate over residues 503 to 514 (KELERVRPRLDR). Residues 517-535 (TSTSSRASRVSTPASVRSP) show a composition bias toward low complexity. Residues 603-620 (RRGHRHHHLPHPHLRHRT) are compositionally biased toward basic residues. Polar residues predominate over residues 644 to 654 (PSRQTEHTQPA). Residues 743 to 832 (DSLGQVDLSR…EGVWESAMDR (90 aa)) form the EH domain.

The protein belongs to the IRS4 family.

Its function is as follows. Positive regulator of phosphatidylinositol 4,5-bisphosphate turnover and negatively regulates signaling through the cell integrity pathway. Involved in rDNA silencing. In Neurospora crassa (strain ATCC 24698 / 74-OR23-1A / CBS 708.71 / DSM 1257 / FGSC 987), this protein is Increased rDNA silencing protein 4 (irs-4).